Here is a 464-residue protein sequence, read N- to C-terminus: Asparagine--tRNA ligase (464 aa).

Belongs to the class-II aminoacyl-tRNA synthetase family. As to quaternary structure, homodimer.

The protein resides in the cytoplasm. The catalysed reaction is tRNA(Asn) + L-asparagine + ATP = L-asparaginyl-tRNA(Asn) + AMP + diphosphate + H(+). In Xanthomonas euvesicatoria pv. vesicatoria (strain 85-10) (Xanthomonas campestris pv. vesicatoria), this protein is Asparagine--tRNA ligase.